The primary structure comprises 610 residues: Elongation factor 4 (610 aa).

Residues 13 to 195 (SHIRNFSIVA…AIVHKLPAPK (183 aa)) form the tr-type G domain. GTP contacts are provided by residues 25–30 (DHGKST) and 142–145 (NKID).

Belongs to the TRAFAC class translation factor GTPase superfamily. Classic translation factor GTPase family. LepA subfamily.

The protein resides in the cell inner membrane. It catalyses the reaction GTP + H2O = GDP + phosphate + H(+). Its function is as follows. Required for accurate and efficient protein synthesis under certain stress conditions. May act as a fidelity factor of the translation reaction, by catalyzing a one-codon backward translocation of tRNAs on improperly translocated ribosomes. Back-translocation proceeds from a post-translocation (POST) complex to a pre-translocation (PRE) complex, thus giving elongation factor G a second chance to translocate the tRNAs correctly. Binds to ribosomes in a GTP-dependent manner. The protein is Elongation factor 4 of Rhizobium johnstonii (strain DSM 114642 / LMG 32736 / 3841) (Rhizobium leguminosarum bv. viciae).